A 166-amino-acid polypeptide reads, in one-letter code: Large ribosomal subunit protein uL10 (166 aa).

The protein belongs to the universal ribosomal protein uL10 family. As to quaternary structure, part of the ribosomal stalk of the 50S ribosomal subunit. The N-terminus interacts with L11 and the large rRNA to form the base of the stalk. The C-terminus forms an elongated spine to which L12 dimers bind in a sequential fashion forming a multimeric L10(L12)X complex.

Forms part of the ribosomal stalk, playing a central role in the interaction of the ribosome with GTP-bound translation factors. The protein is Large ribosomal subunit protein uL10 of Tropheryma whipplei (strain TW08/27) (Whipple's bacillus).